We begin with the raw amino-acid sequence, 134 residues long: Protein Turandot E (134 aa).

The first 38 residues, 1 to 38 (MSYTRTIHSSASILKMNSALQISCLLVVLGCLLGSGHC), serve as a signal peptide directing secretion.

It belongs to the Turandot family.

The protein localises to the secreted. In terms of biological role, a humoral factor that may play a role in stress tolerance. The chain is Protein Turandot E from Drosophila sechellia (Fruit fly).